The chain runs to 623 residues: Chaperone protein HtpG (623 aa).

An a; substrate-binding region spans residues 1–336 (MVSKQQTMGF…ASDLPLNISR (336 aa)). Residues 337–550 (EILQDNKQVE…EQDMGLEMQR (214 aa)) are b. Positions 551–623 (ILQAAGQQVP…NRVNRLLVSS (73 aa)) are c.

Belongs to the heat shock protein 90 family. In terms of assembly, homodimer.

It is found in the cytoplasm. Its function is as follows. Molecular chaperone. Has ATPase activity. In Legionella pneumophila subsp. pneumophila (strain Philadelphia 1 / ATCC 33152 / DSM 7513), this protein is Chaperone protein HtpG.